Reading from the N-terminus, the 197-residue chain is ATP synthase subunit delta', mitochondrial (197 aa).

The transit peptide at 1–19 directs the protein to the mitochondrion; that stretch reads MFRRATSTFLSRASATRRF.

Belongs to the ATPase epsilon chain family. F-type ATPases have 2 components, CF(1) - the catalytic core - and CF(0) - the membrane proton channel. CF(1) has five subunits: alpha(3), beta(3), gamma(1), delta(1), epsilon(1). CF(0) has three main subunits: a, b and c.

The protein resides in the mitochondrion. It is found in the mitochondrion inner membrane. In terms of biological role, mitochondrial membrane ATP synthase (F(1)F(0) ATP synthase or Complex V) produces ATP from ADP in the presence of a proton gradient across the membrane which is generated by electron transport complexes of the respiratory chain. F-type ATPases consist of two structural domains, F(1) - containing the extramembraneous catalytic core, and F(0) - containing the membrane proton channel, linked together by a central stalk and a peripheral stalk. During catalysis, ATP turnover in the catalytic domain of F(1) is coupled via a rotary mechanism of the central stalk subunits to proton translocation. Part of the complex F(1) domain and of the central stalk which is part of the complex rotary element. Rotation of the central stalk against the surrounding alpha(3)beta(3) subunits leads to hydrolysis of ATP in three separate catalytic sites on the beta subunits. This Pisum sativum (Garden pea) protein is ATP synthase subunit delta', mitochondrial.